We begin with the raw amino-acid sequence, 1118 residues long: Constitutive coactivator of PPAR-gamma-like protein 1 (1118 aa).

The segment at 339-405 (PPHYLAARPG…SLSEPAPLTL (67 aa)) is interaction with YES1, SRC and FYN. The tract at residues 374 to 533 (AKPVAPQVPS…GTVQPIPCLL (160 aa)) is disordered. The span at 376–396 (PVAPQVPSPGGAPGQGPYPYS) shows a compositional bias: low complexity. 2 stretches are compositionally biased toward polar residues: residues 405 to 420 (LDTS…SYSN) and 435 to 447 (SPIN…SPNH). Basic and acidic residues predominate over residues 481 to 502 (GWEKTGSHSEPQARGDPGDQTK). The span at 503–514 (AEGSSTASSGSQ) shows a compositional bias: polar residues. Thr-655 is modified (phosphothreonine). Positions 829-1118 (ADQAAKVEKM…LEAAVLNKEE (290 aa)) are RNA binding. Arg-873, Arg-884, and Arg-886 each carry omega-N-methylarginine. The interval 921-945 (AFSGSDSSRTSKSQGGVQPIPSQGG) is disordered. Over residues 924–936 (GSDSSRTSKSQGG) the composition is skewed to polar residues. Lys-932 carries the post-translational modification N6-acetyllysine. Position 960 is a phosphoserine (Ser-960). An omega-N-methylarginine mark is found at Arg-982 and Arg-986. Position 1023 is a phosphoserine (Ser-1023). The interval 1025 to 1102 (EEVAKELKSK…HLNALSTDSA (78 aa)) is disordered. Positions 1026 to 1037 (EVAKELKSKSGE) are enriched in basic and acidic residues. Positions 1038-1051 (SKSSAMSSDGSLAE) are enriched in low complexity. Residues Ser-1044, Ser-1045, and Ser-1048 each carry the phosphoserine modification. Over residues 1076–1101 (HSESALNNDSKTCNTNPHLNALSTDS) the composition is skewed to polar residues.

Belongs to the constitutive coactivator of PPAR-gamma family. As to quaternary structure, interacts with PURA. Interacts with SRC family protein kinases YES1, SRC and FYN. Upon tyrosine phosphorylation, interacts with PIK3R1. Interacts with IGF2BP1/IMP-1 in an RNA-dependent manner. In terms of processing, arg-982 is dimethylated, probably to asymmetric dimethylarginine. Post-translationally, phosphorylated on tyrosine by SRC family protein kinases upon oxidative stress, for instance following UV irradiation. In terms of tissue distribution, widely expressed. In gastric mucosa, detected in the bottom region of the foveolar epithelium (at protein level).

Its subcellular location is the cytoplasm. The protein localises to the cell membrane. Functionally, component of the oxidative stress-induced survival signaling. May regulate the activation of SRC family protein kinases. May act as a scaffolding protein enabling SRC family protein kinases to phosphorylate and activate PI3-kinase. Binds IGF2 RNA and promotes the production of IGF2 protein. This Homo sapiens (Human) protein is Constitutive coactivator of PPAR-gamma-like protein 1 (FAM120A).